Consider the following 301-residue polypeptide: MMRIGLFLLTNLAVLVVAGIILSLFGVGSYHGAGGLNLGNLLVICFVFGMVGSLVSLFMSKWMAKKTTGTELIDPNAPRNQAESWLLQTVAELSQRAGINMPEVGIFPSYQSNAFATGWNKNDALVAVSSGLLERMNKDELRAVLAHEIGHVANGDMVTLALIQGVVNAFVMFFARVVGDFIDRNVFGRQDNEAPGMGYFIITMVLDIVFGILASAIVMWFSRYREYRADEAGARLAGKQAMISALLRLQAETELPDQMPKEMKAFAIAEGKEQGFSLAALFQTHPTIEQRVAALHQLDCP.

The next 2 helical transmembrane spans lie at 4–24 (IGLF…ILSL) and 38–58 (LGNL…VSLF). H147 serves as a coordination point for Zn(2+). Residue E148 is part of the active site. A Zn(2+)-binding site is contributed by H151. 2 helical membrane passes run 155 to 175 (GDMV…MFFA) and 200 to 220 (FIIT…IVMW). Residue E226 coordinates Zn(2+).

Belongs to the peptidase M48B family. Requires Zn(2+) as cofactor.

It localises to the cell inner membrane. This chain is Protease HtpX, found in Acinetobacter baumannii (strain AB307-0294).